We begin with the raw amino-acid sequence, 73 residues long: ATP synthase subunit c (73 aa).

The next 2 helical transmembrane spans lie at 4 to 24 (LAIGAAIAALTGIGAGVGIGI) and 51 to 71 (GALAEATAIYGLLVAIMIIIF).

The protein belongs to the ATPase C chain family. F-type ATPases have 2 components, F(1) - the catalytic core - and F(0) - the membrane proton channel. F(1) has five subunits: alpha(3), beta(3), gamma(1), delta(1), epsilon(1). F(0) has three main subunits: a(1), b(2) and c(10-14). The alpha and beta chains form an alternating ring which encloses part of the gamma chain. F(1) is attached to F(0) by a central stalk formed by the gamma and epsilon chains, while a peripheral stalk is formed by the delta and b chains.

It localises to the cell membrane. Its function is as follows. F(1)F(0) ATP synthase produces ATP from ADP in the presence of a proton or sodium gradient. F-type ATPases consist of two structural domains, F(1) containing the extramembraneous catalytic core and F(0) containing the membrane proton channel, linked together by a central stalk and a peripheral stalk. During catalysis, ATP synthesis in the catalytic domain of F(1) is coupled via a rotary mechanism of the central stalk subunits to proton translocation. In terms of biological role, key component of the F(0) channel; it plays a direct role in translocation across the membrane. A homomeric c-ring of between 10-14 subunits forms the central stalk rotor element with the F(1) delta and epsilon subunits. This chain is ATP synthase subunit c, found in Caldanaerobacter subterraneus subsp. tengcongensis (strain DSM 15242 / JCM 11007 / NBRC 100824 / MB4) (Thermoanaerobacter tengcongensis).